We begin with the raw amino-acid sequence, 523 residues long: Ubiquilin (523 aa).

In terms of domain architecture, Ubiquitin-like spans 2–77 (VKINIKSSTD…VHLVKGAAPP (76 aa)). A disordered region spans residues 70–99 (LVKGAAPPPPPPVEQQVPTPSNTQPQGIPG). STI1 domains are found at residues 100 to 135 (VPQNINDMMNNPMIQEMFNSRMMDSLLDNPDIFRDM) and 139 to 178 (NPEMREVLNNNPEMAQMLSDPRQLRQSLEMMRNPELMREM). Over residues 215-227 (NQQAASQNQTNSN) the composition is skewed to low complexity. A disordered region spans residues 215 to 325 (NQQAASQNQT…ASMFGGGGGG (111 aa)). Residues 228-241 (PIQTNTDANPNSQP) show a composition bias toward polar residues. Positions 245-278 (PWSTNSSSTSSNPTSSSPSSRPTTGSSTNTGASN) are enriched in low complexity. Positions 285–296 (SGGGGGMGGGTN) are enriched in gly residues. Residues 297-310 (NTGTNNTGSTNNTG) are compositionally biased toward low complexity. STI1 domains lie at 339-380 (DPER…RQMM) and 383-415 (NPQLREAMNNPEFLNMMTNPENMNAMMQLQQAM). The region spanning 480–523 (PPEQRFRLQLEQLEELGFVDRAANISALTSTNGNINLAIDRLLR) is the UBA domain.

Stable protein which acts as an antagonist of nosA by repressing cellular differentiation after the tight-aggregate stage, when cells differentiate into two precursor cell types, prespore and prestalk cells, prior to the formation of fruiting bodies. The polypeptide is Ubiquilin (ubqln) (Dictyostelium discoideum (Social amoeba)).